Consider the following 1222-residue polypeptide: ATP-dependent helicase/nuclease subunit A (1222 aa).

In terms of domain architecture, UvrD-like helicase ATP-binding spans 39–495 (QKRTAQQIEA…ILLKENFRSQ (457 aa)). 60-67 (ASAGSGKT) contacts ATP. The region spanning 524–810 (QLIAGSHAQT…NLMTIHKSKG (287 aa)) is the UvrD-like helicase C-terminal domain.

This sequence belongs to the helicase family. AddA subfamily. Heterodimer of AddA and AddB/RexB. It depends on Mg(2+) as a cofactor.

It catalyses the reaction Couples ATP hydrolysis with the unwinding of duplex DNA by translocating in the 3'-5' direction.. The catalysed reaction is ATP + H2O = ADP + phosphate + H(+). Its function is as follows. The heterodimer acts as both an ATP-dependent DNA helicase and an ATP-dependent, dual-direction single-stranded exonuclease. Recognizes the chi site generating a DNA molecule suitable for the initiation of homologous recombination. The AddA nuclease domain is required for chi fragment generation; this subunit has the helicase and 3' -&gt; 5' nuclease activities. The polypeptide is ATP-dependent helicase/nuclease subunit A (Streptococcus pyogenes serotype M6 (strain ATCC BAA-946 / MGAS10394)).